We begin with the raw amino-acid sequence, 880 residues long: Alanine--tRNA ligase (880 aa).

His-568, His-572, Cys-670, and His-674 together coordinate Zn(2+).

This sequence belongs to the class-II aminoacyl-tRNA synthetase family. Requires Zn(2+) as cofactor.

It is found in the cytoplasm. It catalyses the reaction tRNA(Ala) + L-alanine + ATP = L-alanyl-tRNA(Ala) + AMP + diphosphate. Catalyzes the attachment of alanine to tRNA(Ala) in a two-step reaction: alanine is first activated by ATP to form Ala-AMP and then transferred to the acceptor end of tRNA(Ala). Also edits incorrectly charged Ser-tRNA(Ala) and Gly-tRNA(Ala) via its editing domain. In Ligilactobacillus salivarius (strain UCC118) (Lactobacillus salivarius), this protein is Alanine--tRNA ligase.